The chain runs to 334 residues: MKAIVVPGPKQGYKLEEVPDPKPGKDEVIIRVDRAALCYRDLLQLQGYYPRMKYPVILGHEVVGTIEEVGENIKGFEVGDKVISLLYAPDGTCEYCQIGEEAYCHHRLGYSEELDGFFAEKAKIKVTSLVKVPKGTPDEGAVLVPCVTGMIYRGIRRAGGIRKGELVLVTGASGGVGIHAIQVAKALGAKVIGVTTSEEKAKIIKQYADYVIVGTKFSEEAKKIGDVTLVIDTVGTPTFDESLKSLWMGGRIVQIGNVDPSQIYNLRLGYIILKDLKIVGHASATKKDAEDTLKLTQEGKIKPVIAGTVSLENIDEGYKMIKDKNKVGKVLVKP.

C38 contributes to the Zn(2+) binding site. An NADP(+)-binding site is contributed by Y39. Residues H60, D90, C93, C96, C104, and C146 each contribute to the Zn(2+) site. Residues 173 to 176 and 195 to 197 each bind NADP(+); these read SGGV and TTS.

It belongs to the zinc-containing alcohol dehydrogenase family. Monomer. The cofactor is Zn(2+).

The enzyme catalyses propanoyl-CoA + NADP(+) = acryloyl-CoA + NADPH + H(+). Its function is as follows. Plays a role in autotrophic carbon fixation via the 3-hydroxypropionate/4-hydroxybutyrate cycle. Catalyzes the acryloyl-CoA dependent NADPH oxidation and formation of propionyl-CoA. Inactive towards 3-hydroxypropionyl-CoA, NADH and crotonyl-CoA. The polypeptide is Acryloyl-coenzyme A reductase (Sulfurisphaera tokodaii (strain DSM 16993 / JCM 10545 / NBRC 100140 / 7) (Sulfolobus tokodaii)).